The chain runs to 425 residues: 3-isopropylmalate dehydratase large subunit (425 aa).

[4Fe-4S] cluster is bound by residues Cys305, Cys365, and Cys368.

The protein belongs to the aconitase/IPM isomerase family. LeuC type 2 subfamily. In terms of assembly, heterodimer of LeuC and LeuD. The cofactor is [4Fe-4S] cluster.

The catalysed reaction is (2R,3S)-3-isopropylmalate = (2S)-2-isopropylmalate. The protein operates within amino-acid biosynthesis; L-leucine biosynthesis; L-leucine from 3-methyl-2-oxobutanoate: step 2/4. Its function is as follows. Catalyzes the isomerization between 2-isopropylmalate and 3-isopropylmalate, via the formation of 2-isopropylmaleate. The protein is 3-isopropylmalate dehydratase large subunit of Clostridioides difficile (strain 630) (Peptoclostridium difficile).